Reading from the N-terminus, the 635-residue chain is Cilia- and flagella-associated protein 206 (635 aa).

The protein belongs to the CFAP206 family.

Its subcellular location is the cytoplasm. It localises to the cytoskeleton. It is found in the cilium axoneme. In terms of biological role, may regulate cilium motility through its role in the assembly of the axonemal RS2 radial spoke. The protein is Cilia- and flagella-associated protein 206 of Tetrahymena thermophila (strain SB210).